We begin with the raw amino-acid sequence, 37 residues long: Large ribosomal subunit protein bL36 (37 aa).

This sequence belongs to the bacterial ribosomal protein bL36 family.

In Thermus thermophilus (strain ATCC BAA-163 / DSM 7039 / HB27), this protein is Large ribosomal subunit protein bL36.